Reading from the N-terminus, the 307-residue chain is Mitochondrial brown fat uncoupling protein 1 (307 aa).

Residues 1–10 (MVSLTTSEVH) lie on the Mitochondrial intermembrane side of the membrane. A helical membrane pass occupies residues 11–32 (PTMGVKTFSAGISACLADIITF). Solcar repeat units follow at residues 11-102 (PTMG…VQEY), 111-201 (PTLG…MKGA), and 210-295 (DDVP…LKKE). Residues 33–73 (PLDTAKVRLQIQGEGQTSSTIRYKGVLGTITTLAKTEGWPK) lie on the Mitochondrial matrix side of the membrane. Fatty acid 16:0 is bound at residue K56. Residues 74 to 96 (LYSGLPAGIQRQISFASLRIGLY) traverse the membrane as a helical segment. The Mitochondrial intermembrane segment spans residues 97–116 (DTVQEYFSSGKETPPTLGNR). Residues 117–133 (ISAGLMTGGVAVFIGQP) traverse the membrane as a helical segment. The Mitochondrial matrix portion of the chain corresponds to 134-178 (TEVVKVRLQAQSHLHGIKPRYTGTYNAYRIIATTESFSTLWKGTT). Residues 179–195 (PNLMRNVIINRTELVTY) form a helical membrane-spanning segment. The Mitochondrial intermembrane portion of the chain corresponds to 196 to 212 (DLMKGALVNNQILADDV). A helical membrane pass occupies residues 213–232 (PCHLLSALVAGFCTTFLASP). The Mitochondrial matrix segment spans residues 233–266 (ADVVKTRFINSLPGQYPSVPSCAMTMLTKEGPTA). Residue C254 is modified to Cysteine sulfenic acid (-SOH). A helical transmembrane segment spans residues 267–289 (FFKGFVPSFLRLASWNVIMFVCF). Fatty acid 16:0 is bound at residue K269. Topologically, residues 290 to 307 (EQLKKELMKSRQTMDCTT) are mitochondrial intermembrane.

This sequence belongs to the mitochondrial carrier (TC 2.A.29) family. As to quaternary structure, most probably functions as a monomer. Binds one purine nucleotide per monomer. However, has also been suggested to function as a homodimer or a homotetramer. Tightly associates with cardiolipin in the mitochondrion inner membrane; may stabilize and regulate its activity. Post-translationally, may undergo sulfenylation upon cold exposure. May increase the sensitivity of UCP1 thermogenic function to the activation by noradrenaline probably through structural effects. In terms of processing, may undergo ubiquitin-mediated proteasomal degradation.

The protein resides in the mitochondrion inner membrane. It carries out the reaction H(+)(in) = H(+)(out). Has no constitutive proton transporter activity and has to be activated by long-chain fatty acids/LCFAs. Inhibited by purine nucleotides. Both purine nucleotides and LCFAs bind the cytosolic side of the transporter and directly compete to activate or inhibit it. Activated by noradrenaline and reactive oxygen species. Despite lacking canonical translational encoding for selenocysteine, a small pool of the protein has been observed to selectively incorporate selenocysteine at 'Cys-254'. Selenocysteine-modified protein is highly sensitive to redox modification and may constitute a pool of protein highly sensitive to activation by elevated levels of reactive oxygen species (ROS). Functionally, mitochondrial protein responsible for thermogenic respiration, a specialized capacity of brown adipose tissue and beige fat that participates in non-shivering adaptive thermogenesis to temperature and diet variations and more generally to the regulation of energy balance. Functions as a long-chain fatty acid/LCFA and proton symporter, simultaneously transporting one LCFA and one proton through the inner mitochondrial membrane. However, LCFAs remaining associated with the transporter via their hydrophobic tails, it results in an apparent transport of protons activated by LCFAs. Thereby, dissipates the mitochondrial proton gradient and converts the energy of substrate oxydation into heat instead of ATP. Regulates the production of reactive oxygen species/ROS by mitochondria. The protein is Mitochondrial brown fat uncoupling protein 1 of Dicrostonyx groenlandicus (Northern collared lemming).